The chain runs to 420 residues: Serine hydroxymethyltransferase (420 aa).

Residues Leu-123 and Gly-127–Leu-129 contribute to the (6S)-5,6,7,8-tetrahydrofolate site. An N6-(pyridoxal phosphate)lysine modification is found at Lys-232. Residue Ser-357 to Phe-359 coordinates (6S)-5,6,7,8-tetrahydrofolate.

Belongs to the SHMT family. In terms of assembly, homodimer. Requires pyridoxal 5'-phosphate as cofactor.

It is found in the cytoplasm. The enzyme catalyses (6R)-5,10-methylene-5,6,7,8-tetrahydrofolate + glycine + H2O = (6S)-5,6,7,8-tetrahydrofolate + L-serine. Its pathway is one-carbon metabolism; tetrahydrofolate interconversion. It functions in the pathway amino-acid biosynthesis; glycine biosynthesis; glycine from L-serine: step 1/1. Functionally, catalyzes the reversible interconversion of serine and glycine with tetrahydrofolate (THF) serving as the one-carbon carrier. This reaction serves as the major source of one-carbon groups required for the biosynthesis of purines, thymidylate, methionine, and other important biomolecules. Also exhibits THF-independent aldolase activity toward beta-hydroxyamino acids, producing glycine and aldehydes, via a retro-aldol mechanism. The polypeptide is Serine hydroxymethyltransferase (Streptococcus pyogenes serotype M12 (strain MGAS2096)).